The following is a 1187-amino-acid chain: ATP-dependent DNA helicase MPH1 (1187 aa).

The region spanning 144-311 (IVERAFYDNL…QIIDNLNISK (168 aa)) is the Helicase ATP-binding domain. 157-164 (LPTGLGKT) contributes to the ATP binding site. A DEAH box motif is present at residues 259 to 262 (DEAH). The Helicase C-terminal domain occupies 486–681 (ELDDFFKNHE…FIQLRPQHRM (196 aa)). Disordered regions lie at residues 542-576 (VENF…MTGM), 781-848 (DKLV…NNQV), and 941-1003 (PEKP…LGVK). Residues 547–556 (KKKQKGQTKK) are compositionally biased toward basic residues. Residues 564–576 (TRSSSENAQMTGM) are compositionally biased toward polar residues. Positions 781-817 (DKLVDSDSESEVDKENENVIQEVDKSKNQEQNDHIIT) are enriched in basic and acidic residues. Residues 822–848 (TEQSVAGNTKSTTNGTSYSEPENNNQV) are compositionally biased toward polar residues. Over residues 967–977 (SNSISIPSSTT) the composition is skewed to low complexity. Residues 980-989 (SHNEVTRKVV) are compositionally biased toward basic and acidic residues.

Belongs to the DEAD box helicase family. DEAH subfamily. FANCM sub-subfamily. In terms of assembly, interacts with the MHF histone-fold complex to form the FANCM-MHF complex.

Its subcellular location is the nucleus. It carries out the reaction ATP + H2O = ADP + phosphate + H(+). Its function is as follows. ATP-dependent DNA helicase involved in DNA damage repair by homologous recombination and in genome maintenance. Capable of unwinding D-loops. Plays a role in limiting crossover recombinants during mitotic DNA double-strand break (DSB) repair. Component of a FANCM-MHF complex which promotes gene conversion at blocked replication forks, probably by reversal of the stalled fork. The protein is ATP-dependent DNA helicase MPH1 of Candida albicans (strain SC5314 / ATCC MYA-2876) (Yeast).